The sequence spans 238 residues: Ciliary microtubule associated protein 1B (238 aa).

One copy of the STPGR repeat lies at 182–207 (PGPCAYHVVNPMIYKTRAPQFTMLGR). Residues 206 to 238 (GRTLPPRENTKKPGPASYSVDKVVWSRGSRGRG) are disordered.

Belongs to the CIMAP family.

It localises to the cell projection. It is found in the cilium. The protein resides in the flagellum. The protein is Ciliary microtubule associated protein 1B (Cimap1b) of Mus musculus (Mouse).